The chain runs to 558 residues: Cyclomaltodextrinase (558 aa).

Asparagine 143, glycine 168, and aspartate 170 together coordinate Ca(2+). Residues histidine 243 and arginine 323 each coordinate substrate. Aspartate 325 acts as the Nucleophile in catalysis. Glutamate 354 serves as the catalytic Proton donor. Substrate is bound by residues 420-421 (HD), aspartate 465, and arginine 469.

It belongs to the glycosyl hydrolase 13 family. In terms of assembly, monomer. Depending on the pH of the solution, exists as a monomer, a homodimer or as an assembly of six homodimers forming a dodecamer, which is catalytically the most efficient form of the enzyme. Requires Ca(2+) as cofactor.

It carries out the reaction cyclomaltodextrin + H2O = linear maltodextrin. The enzyme catalyses Hydrolysis of pullulan to panose (6-alpha-D-glucosylmaltose).. Its activity is regulated as follows. Hydrolysis of beta-cyclodextrin is inhibited by Cu(2+), Zn(2+) and Ag(+), and activated by Ca(2+), EGTA and EDTA. Activity is increased over twofold in the presence of 5 mM EDTA. Competitively inhibited by acarbose and methyl 6-amino-6-deoxy-alpha-D-glucopyranoside by reducing the rate of the ring opening step of the reaction. Its function is as follows. Hydrolyzes alpha-, beta- and gamma-cyclodextrins and the resulting linear maltodextrins, with the highest activity with beta-cyclodextrin (cyclomaltoheptaose). Soluble starch is hydrolyzed slowly, but it is nevertheless preferred over pullulan as a substrate. Is able to hydrolyze amylose and amylopectin, with a very strong preference for amylose, with maltose and glucose as the main products. Maltose and glucose are the main hydrolysis products of cyclomaltodextrins, maltodextrins and starch, whereas panose is the main hydrolysis product of pullulan. Acarbose is partially hydrolyzed to glucose and pseudotrisaccharide. No activity with maltose as substrate. Has transglycosylating activity with high concentrations of maltotriose, maltotetraose and starch. In Bacillus sp, this protein is Cyclomaltodextrinase.